Here is a 174-residue protein sequence, read N- to C-terminus: RNA pyrophosphohydrolase (174 aa).

Positions 6-149 (GYRPNVGIVI…KRDVYRRALK (144 aa)) constitute a Nudix hydrolase domain. Positions 38–59 (GGIDEGETPEQAMYRELYEEVG) match the Nudix box motif.

It belongs to the Nudix hydrolase family. RppH subfamily. A divalent metal cation serves as cofactor.

Its function is as follows. Accelerates the degradation of transcripts by removing pyrophosphate from the 5'-end of triphosphorylated RNA, leading to a more labile monophosphorylated state that can stimulate subsequent ribonuclease cleavage. In Photobacterium profundum (strain SS9), this protein is RNA pyrophosphohydrolase.